Reading from the N-terminus, the 157-residue chain is MGVIEFLFALAQDMILAAIPAVGFAMVFNVPVRALRWCALLGAIGHGSRMILMTRGLNIEWSTFMASMLVGTIGIQWSRWYLAHPKVFTVAAVIPMFPGISAYTAMISAVKISQLGYSEPLMITLLTNFLTASSIVGALSIGLSIPGLWLYRKRPRV.

Transmembrane regions (helical) follow at residues 8–28, 57–77, 87–107, and 129–149; these read FALA…AMVF, LNIE…GIQW, VFTV…TAMI, and FLTA…PGLW.

It belongs to the ThrE exporter (TC 2.A.79) family. The transporter is composed of YjjB and YjjP.

Its subcellular location is the cell inner membrane. Its function is as follows. Involved in succinate export with YjjP. Both proteins are required for export. The sequence is that of Probable succinate transporter subunit YjjB from Shigella boydii serotype 4 (strain Sb227).